The chain runs to 397 residues: UDP-GlcNAc:betaGal beta-1,3-N-acetylglucosaminyltransferase 8 (397 aa).

The Cytoplasmic portion of the chain corresponds to 1 to 6; it reads MRCPKC. A helical; Signal-anchor for type II membrane protein transmembrane segment spans residues 7 to 23; sequence LLCLSALLTLLGLKVYI. Residues 24 to 397 are Lumenal-facing; the sequence is EWTSESRLSK…KQLQDPRLQC (374 aa). Positions 33–58 are disordered; it reads KAYPSPRGTPPSPTPANPEPTLPANL. Residues 39–53 are compositionally biased toward pro residues; the sequence is RGTPPSPTPANPEPT. Asn-57 is a glycosylation site (N-linked (GlcNAc...) asparagine).

Belongs to the glycosyltransferase 31 family. Interacts with B3GNT2; this interaction greatly increases B3GNT2 catalytic activity, independently of B3GNT8 enzymatic activity. In terms of tissue distribution, highly expressed in small intestine, pancreas, spleen, bone marrow, lung, throat, and ileum, and weakly in fetal brain, cerebellum, heart, liver, tongue, breast, uteri, and testis. Not detected in colon. Differentially expressed in human tumor cell lines.

The protein resides in the golgi apparatus membrane. It functions in the pathway protein modification; protein glycosylation. In terms of biological role, beta-1,3-N-acetylglucosaminyltransferase that plays a role in the elongation of specific branch structures of multiantennary N-glycans. Has strong activity towards tetraantennary N-glycans and 2,6 triantennary glycans. The sequence is that of UDP-GlcNAc:betaGal beta-1,3-N-acetylglucosaminyltransferase 8 from Homo sapiens (Human).